Reading from the N-terminus, the 91-residue chain is Transcription factor znf27 (91 aa).

The protein resides in the nucleus. Its function is as follows. Transcription factor; part of the gene cluster 27 that mediates the biosynthesis of asparasone A, a sclerotium-specific anthraquinone pigment important for sclerotial survival. Controls the expression of the non-reducing polyketide synthase (NRPKS) pks27. The polypeptide is Transcription factor znf27 (Aspergillus flavus (strain ATCC 200026 / FGSC A1120 / IAM 13836 / NRRL 3357 / JCM 12722 / SRRC 167)).